The chain runs to 281 residues: DegV domain-containing protein YqaC (281 aa).

Residues 3 to 279 (LAVITDSSAD…LNTVAYGISP (277 aa)) form the DegV domain. The hexadecanoate site is built by Thr-60 and Ser-93.

Functionally, may bind long-chain fatty acids, such as palmitate, and may play a role in lipid transport or fatty acid metabolism. In Lactococcus lactis subsp. lactis (strain IL1403) (Streptococcus lactis), this protein is DegV domain-containing protein YqaC (yqaC).